The primary structure comprises 622 residues: Sodium/potassium/calcium exchanger 4 (622 aa).

The N-terminal stretch at 1–38 (MALRGTLRPLKVRRRREMLPQQVGFVCAVLALVCCASG) is a signal peptide. The Extracellular segment spans residues 39 to 97 (LFGSLGHKTASASKRVLPDTWRNRKLMAPVNGTQTAKNCTDPAIHEFPTDLFSNKERQH). 2 N-linked (GlcNAc...) asparagine glycosylation sites follow: Asn69 and Asn76. A helical membrane pass occupies residues 98–118 (GAVLLHILGALYMFYALAIVC). The Cytoplasmic segment spans residues 119 to 142 (DDFFVPSLEKICERLHLSEDVAGA). The stretch at 139–179 (VAGATFMAAGSSTPELFASVIGVFITHGDVGVGTIVGSAVF) is one Alpha-1 repeat. Residues 143-163 (TFMAAGSSTPELFASVIGVFI) traverse the membrane as a helical segment. The Extracellular portion of the chain corresponds to 164–172 (THGDVGVGT). A helical membrane pass occupies residues 173-193 (IVGSAVFNILCIIGVCGLFAG). Residues 194–200 (QVVRLTW) lie on the Cytoplasmic side of the membrane. A helical membrane pass occupies residues 201–221 (WAVCRDSVYYTISVIVLIVFI). At 222–224 (YDE) the chain is on the extracellular side. The helical transmembrane segment at 225 to 245 (QIVWWEGLVLIILYVFYILIM) threads the bilayer. Residues 246–457 (KYNVKMQAFF…RWEKFFMVTF (212 aa)) lie on the Cytoplasmic side of the membrane. The tract at residues 358–410 (ANGVSSKPLQNGRHENIENGNVPVENPEDPQQNQEQQPPPQPPPPEPEPVEAD) is disordered. Low complexity predominate over residues 380–393 (PVENPEDPQQNQEQ). Over residues 394-404 (QPPPQPPPPEP) the composition is skewed to pro residues. The chain crosses the membrane as a helical span at residues 458 to 478 (ITATLWIAVFSYIMVWLVTII). Gly479 is a topological domain (extracellular). The helical transmembrane segment at 480 to 500 (YTLGIPDVIMGITFLAAGTSV) threads the bilayer. The stretch at 495–526 (AAGTSVPDCMASLIVARQGLGDMAVSNTIGSN) is one Alpha-2 repeat. Over 501–526 (PDCMASLIVARQGLGDMAVSNTIGSN) the chain is Cytoplasmic. The chain crosses the membrane as a helical span at residues 527–547 (VFDILVGLGVPWGLQTMVVNY). Topologically, residues 548–557 (GSTVKINSRG) are extracellular. A helical membrane pass occupies residues 558–578 (LVYSVVLLLGSVALTVLGIHL). At 579–586 (NKWRLDRK) the chain is on the cytoplasmic side. Residues 587–607 (LGVYVLVLYAIFLCFSIMIEF) form a helical membrane-spanning segment. The Extracellular portion of the chain corresponds to 608–622 (NVFTFVNLPMCREDD).

This sequence belongs to the Ca(2+):cation antiporter (CaCA) (TC 2.A.19) family. SLC24A subfamily. Expressed abundantly in all regions of the brain, aorta, lung and thymus. Expressed at lower levels in the stomach and intestine.

Its subcellular location is the cell membrane. The protein localises to the cytoplasm. It carries out the reaction Ca(2+)(out) + K(+)(out) + 4 Na(+)(in) = Ca(2+)(in) + K(+)(in) + 4 Na(+)(out). In terms of biological role, calcium, potassium:sodium antiporter that transports 1 Ca(2+) and 1 K(+) in exchange for 4 Na(+). Controls the rapid response termination and proper regulation of adaptation in olfactory sensory neurons (OSNs) which subsequently influences how odor information is encoded and perceived. May play a role in calcium transport during amelogenesis. The sequence is that of Sodium/potassium/calcium exchanger 4 from Homo sapiens (Human).